The sequence spans 517 residues: Transmembrane protein 180 (517 aa).

The Extracellular segment spans residues 1 to 11; that stretch reads MRLGGPWAWLL. Residues 12 to 43 traverse the membrane as a helical segment; that stretch reads GLPTAVVYGSLALFVSVLHNVFLLYYVDTFVS. Residues 44-55 are Cytoplasmic-facing; the sequence is VYKIDKAAFWVG. Residues 56–74 form a helical membrane-spanning segment; the sequence is ETVFLLWNSLNDPLFGWLS. Residues 75–100 lie on the Extracellular side of the membrane; it reads DRQFLSSQPRSGAGLSSRAVVLARVR. A helical transmembrane segment spans residues 101–118; the sequence is ALGWHGPLLALSFLAFWV. Residues 119–126 are Cytoplasmic-facing; that stretch reads PWAPAGLQ. Residues 127-151 traverse the membrane as a helical segment; it reads FLLCLCLYDGFLTLVDLHHHALLAD. Residues 152–155 lie on the Extracellular side of the membrane; sequence LALS. A helical membrane pass occupies residues 156–179; sequence AHDRTHLNFYCSLFSAAGSLSVFA. At 180–191 the chain is on the cytoplasmic side; that stretch reads SYAFWNKEDFSS. The chain crosses the membrane as a helical span at residues 192–223; it reads FRAFCLALATGSGLGFVGAARLLRRRVEAAGR. At 224-264 the chain is on the extracellular side; it reads EPGCPAMAVNDGLCEEELLVGGEEAGSITLGQYLQQLARHR. Residues 265-292 form a helical membrane-spanning segment; sequence NFLWFVGMDLVQVFHCHFNSNFFPLFLE. Residues 293 to 305 are Cytoplasmic-facing; sequence HLLSDHISLSTGS. The helical transmembrane segment at 306–325 threads the bilayer; the sequence is FLLGISYVAPHLNNLYFLPL. The Extracellular segment spans residues 326 to 330; it reads CRRWG. A helical transmembrane segment spans residues 331–350; the sequence is VYAVVRGLFLLKLGLSLLML. Residues 351–358 lie on the Cytoplasmic side of the membrane; sequence LAGPDHPG. A helical transmembrane segment spans residues 359–393; that stretch reads LLCLFIASNRVFTEGTCKLLTLVVTDLVDEDLVLN. At 394–402 the chain is on the extracellular side; sequence HRKQAASAL. A helical transmembrane segment spans residues 403–429; that stretch reads LFGMVALVTKPGQTFAPLLGTWLLCFY. Over 430–466 the chain is Cytoplasmic; that stretch reads TGHDLFQQHPPAPVGSAQPWPEPPAPPPAQAPPLRQG. The helical transmembrane segment at 467 to 485 threads the bilayer; the sequence is CFYLLVLVPIACALLQLFT. Over 486-517 the chain is Extracellular; it reads WSQFTLHGRRLHMVKAQRQSLSRAQTLDVKMV.

It is found in the cell membrane. The polypeptide is Transmembrane protein 180 (Bos taurus (Bovine)).